The sequence spans 245 residues: UDP-N-acetyl-D-mannosaminuronic acid transferase (245 aa).

This sequence belongs to the glycosyltransferase 26 family.

The catalysed reaction is UDP-N-acetyl-alpha-D-mannosaminouronate + N-acetyl-alpha-D-glucosaminyl-di-trans,octa-cis-undecaprenyl diphosphate = beta-D-ManNAcA-(1-&gt;4)-alpha-D-GlcNAc-di-trans,octa-cis-undecaprenyl diphosphate + UDP + H(+). It participates in bacterial outer membrane biogenesis; enterobacterial common antigen biosynthesis. In terms of biological role, catalyzes the synthesis of Und-PP-GlcNAc-ManNAcA (Lipid II), the second lipid-linked intermediate involved in enterobacterial common antigen (ECA) synthesis. The sequence is that of UDP-N-acetyl-D-mannosaminuronic acid transferase from Proteus mirabilis (strain HI4320).